The chain runs to 348 residues: Glucan endo-1,3-beta-glucosidase, basic isoform (348 aa).

Q1 carries the pyrrolidone carboxylic acid modification. E95 acts as the Proton donor in catalysis. E240 (nucleophile) is an active-site residue. Residues 317–348 (AQRMQRLLLMSSMQHIPLRVTCKLEPSSQSLL) constitute a propeptide, removed in mature form.

This sequence belongs to the glycosyl hydrolase 17 family.

Its subcellular location is the vacuole. It catalyses the reaction Hydrolysis of (1-&gt;3)-beta-D-glucosidic linkages in (1-&gt;3)-beta-D-glucans.. Its function is as follows. Implicated in the defense of plants against pathogens. This is Glucan endo-1,3-beta-glucosidase, basic isoform from Phaseolus vulgaris (Kidney bean).